Consider the following 116-residue polypeptide: MKKYFLILASFMLVACSSSEQNLTYSTKPILNITSSLSPLIQVETTQKSAVIKNKSQQLLNISYHLYWYDHLGVTQIWENQQESYSAQFLLKPQEQKSIDLTKPTVESKNYRLYLK.

An N-terminal signal peptide occupies residues 1-15 (MKKYFLILASFMLVA).

This is an uncharacterized protein from Haemophilus influenzae (strain ATCC 51907 / DSM 11121 / KW20 / Rd).